The sequence spans 627 residues: Transducer protein MpcT (627 aa).

A run of 2 helical transmembrane segments spans residues 28–48 and 55–75; these read MLTA…LTVF and LIGV…TYLI. 2 HAMP domains span residues 78 to 132 and 192 to 247; these read ADFV…VASR and EQLR…DTIS. Residues 266 to 502 form the Methyl-accepting transducer domain; that stretch reads RVDAVADRSA…DVVGMVEEVA (237 aa). 3 positions are modified to glutamate methyl ester (Glu): Glu310, Glu416, and Glu507. Disordered regions lie at residues 505-527 and 557-627; these read SEET…DATD and GTAD…ADSQ. Residues 580-590 show a composition bias toward low complexity; the sequence is AAAVVDQPQPA.

This sequence belongs to the methyl-accepting chemotaxis (MCP) protein family. As to quaternary structure, interacts with CheA, CheY and CheW1. Methylated by CheR.

The protein localises to the cell membrane. Mediates bacteriorhodopsin- and halorhodopsin-dependent photoresponses by detecting membrane potential changes. Probably transduces the signal to the histidine kinase CheA. In Halobacterium salinarum (strain ATCC 29341 / DSM 671 / R1), this protein is Transducer protein MpcT (mpcT).